The following is a 1087-amino-acid chain: Exoglucanase XynX (1087 aa).

The signal sequence occupies residues 1–30; sequence MKNNLSKFVSIFTAFIMIFGTSLFFPHVSA. The region spanning 37 to 188 is the CBM-cenC domain; sequence ANLVSNGDFE…YIDDVVVTPQ (152 aa). The region spanning 204–527 is the GH10 domain; sequence QNDIPDLSSV…KPAYWAIADP (324 aa). Residue Glu-347 is the Proton donor of the active site. Asp-389 is an active-site residue. Catalysis depends on Glu-452, which acts as the Nucleophile. SLH domains follow at residues 903–966, 967–1025, and 1028–1087; these read KKSV…YNGE, FSDV…KEEN, and ATSF…SNNL.

This sequence belongs to the glycosyl hydrolase 10 (cellulase F) family.

The enzyme catalyses Hydrolysis of (1-&gt;4)-beta-D-glucosidic linkages in cellulose and cellotetraose, releasing cellobiose from the non-reducing ends of the chains.. In Acetivibrio thermocellus (Hungateiclostridium thermocellum), this protein is Exoglucanase XynX (xynX).